The following is a 128-amino-acid chain: Ribosome-binding factor A (128 aa).

The protein belongs to the RbfA family. Monomer. Binds 30S ribosomal subunits, but not 50S ribosomal subunits or 70S ribosomes.

It is found in the cytoplasm. Functionally, one of several proteins that assist in the late maturation steps of the functional core of the 30S ribosomal subunit. Associates with free 30S ribosomal subunits (but not with 30S subunits that are part of 70S ribosomes or polysomes). Required for efficient processing of 16S rRNA. May interact with the 5'-terminal helix region of 16S rRNA. The sequence is that of Ribosome-binding factor A from Pseudomonas paraeruginosa (strain DSM 24068 / PA7) (Pseudomonas aeruginosa (strain PA7)).